The primary structure comprises 194 residues: MHFEAYPPEVNSANIYAGPGPDSMLAAARAWRSLDVEMTAVQRSFNRTLLSLMDAWAGPVVMQLMEAAKPFVRWLTDLCVQLSEVERQIHEIVRAYEWAHHDMVPLAQIYNNRAERQILIDNNALGQFTAQIADLDQEYDDFWDEDGEVMRDYRLRVSDALSKLTPWKAPPPIAHSTVLVAPVSPSTASSRTDT.

The protein belongs to the mycobacterial PPE family. As to quaternary structure, forms a heterodimer with PE25. The dimer forms a 1:1:1 heterotrimeric complex with EspG5. PPE41 interacts directly with EspG5.

It localises to the secreted. It is found in the cell surface. The PE25/PPE41 dimer induces both a strong humoral and cellular immune response. The dimer induces necrosis, but not apoptosis, in mouse macrophage cells. It also induces activation and maturation of mouse dendritic cells and drives Th2-biased immune responses. This Mycobacterium tuberculosis (strain ATCC 25618 / H37Rv) protein is PPE family protein PPE41.